Here is a 1855-residue protein sequence, read N- to C-terminus: Chitin synthase 5 (1855 aa).

In terms of domain architecture, Myosin motor spans 1–778 (MSSAPTTQQN…CWRQIVRAGD (778 aa)). 95 to 102 (GESGTGKT) lines the ATP pocket. N-linked (GlcNAc...) asparagine glycans are attached at residues Asn221, Asn520, and Asn558. A disordered region spans residues 585-650 (AVQQASVASK…PKSADTQQGA (66 aa)). Positions 658 to 682 (LDNINKSLTAPNTNPYFFFCLKPND) are actin-binding. Asn662 carries N-linked (GlcNAc...) asparagine glycosylation. 2 helical membrane-spanning segments follow: residues 887–907 (WLVL…RIIG) and 922–942 (VAIN…MVGF). The Cytochrome b5 heme-binding domain maps to 950-1008 (QHVFSPSELTSYDGKNSDAYVAIRGNVFDLGAFIPQHYPSIVPASALEKYAGTDATNLF). Residues Asn1037 and Asn1061 are each glycosylated (N-linked (GlcNAc...) asparagine). The helical transmembrane segment at 1199 to 1219 (ILLAVSIMLVSVICFKFLAAL) threads the bilayer. N-linked (GlcNAc...) asparagine glycans are attached at residues Asn1422, Asn1456, and Asn1562. A run of 3 helical transmembrane segments spans residues 1587 to 1607 (FVVF…GYIV), 1621 to 1641 (ATTA…IFIV), and 1650 to 1670 (WMII…LIAF). N-linked (GlcNAc...) asparagine glycosylation is found at Asn1755 and Asn1767. The 56-residue stretch at 1797-1852 (MPNDDAILAEIREILATADLMTVTKKSIKAELERRFGVPMDSRRQYIGSATEAILS) folds into the DEK-C domain.

In the N-terminal section; belongs to the TRAFAC class myosin-kinesin ATPase superfamily. Myosin family. This sequence in the C-terminal section; belongs to the chitin synthase family. Class V subfamily.

It is found in the apical cell membrane. Its subcellular location is the cell septum. The protein localises to the cell tip. The enzyme catalyses [(1-&gt;4)-N-acetyl-beta-D-glucosaminyl](n) + UDP-N-acetyl-alpha-D-glucosamine = [(1-&gt;4)-N-acetyl-beta-D-glucosaminyl](n+1) + UDP + H(+). In terms of biological role, polymerizes chitin, a structural polymer of the cell wall and septum, by transferring the sugar moiety of UDP-GlcNAc to the non-reducing end of the growing chitin polymer. This chain is Chitin synthase 5, found in Zymoseptoria tritici (strain CBS 115943 / IPO323) (Speckled leaf blotch fungus).